A 127-amino-acid polypeptide reads, in one-letter code: V-type proton ATPase subunit F (127 aa).

This sequence belongs to the V-ATPase F subunit family. In terms of assembly, V-ATPase is a heteromultimeric enzyme made up of two complexes: the ATP-hydrolytic V1 complex and the proton translocation V0 complex. The V1 complex consists of three catalytic AB heterodimers that form a heterohexamer, three peripheral stalks each consisting of EG heterodimers, one central rotor including subunits D and F, and the regulatory subunits C and H. The proton translocation complex V0 consists of the proton transport subunit a, a ring of proteolipid subunits c9c'', rotary subunit d, subunits e and f, and the accessory subunits VhaAC45 and ATP6AP2.

Its function is as follows. Subunit of the V1 complex of vacuolar(H+)-ATPase (V-ATPase), a multisubunit enzyme composed of a peripheral complex (V1) that hydrolyzes ATP and a membrane integral complex (V0) that translocates protons. V-ATPase is responsible for acidifying and maintaining the pH of intracellular compartments and in some cell types, is targeted to the plasma membrane, where it is responsible for acidifying the extracellular environment. The sequence is that of V-type proton ATPase subunit F (Vha14) from Anopheles gambiae (African malaria mosquito).